Here is a 448-residue protein sequence, read N- to C-terminus: Phosphoglucosamine mutase (448 aa).

The active-site Phosphoserine intermediate is the Ser-102. Positions 102, 243, 245, and 247 each coordinate Mg(2+). Ser-102 carries the post-translational modification Phosphoserine.

The protein belongs to the phosphohexose mutase family. It depends on Mg(2+) as a cofactor. Post-translationally, activated by phosphorylation.

It carries out the reaction alpha-D-glucosamine 1-phosphate = D-glucosamine 6-phosphate. Catalyzes the conversion of glucosamine-6-phosphate to glucosamine-1-phosphate. This Mycobacterium bovis (strain ATCC BAA-935 / AF2122/97) protein is Phosphoglucosamine mutase.